The sequence spans 262 residues: MIHPSAKIHPTALIEEGAVIGEDVFIGPFCIVEGTVEIKARTVLKSHVVVRGDTVIGEDNEIYQFTSIGEVNQDLKYKGEATKTIIGNSNKIREHVTIHRGTIQGCGVTAIGNNNLLMINVHVAHDCQIKNNCILANNATLAGHVELDDFVIVGGMSAIHQFVIVGAHVMLGGGSMVSQDVPPYVMAQGNHARPFGVNLEGLKRRGFDKPTMHAIRNIYKMIYRSGKTLEEVLPEIEQIAETDSAISFFVEFFKRSTRGIIR.

The protein belongs to the transferase hexapeptide repeat family. LpxA subfamily. In terms of assembly, homotrimer.

Its subcellular location is the cytoplasm. It carries out the reaction a (3R)-hydroxyacyl-[ACP] + UDP-N-acetyl-alpha-D-glucosamine = a UDP-3-O-[(3R)-3-hydroxyacyl]-N-acetyl-alpha-D-glucosamine + holo-[ACP]. It functions in the pathway glycolipid biosynthesis; lipid IV(A) biosynthesis; lipid IV(A) from (3R)-3-hydroxytetradecanoyl-[acyl-carrier-protein] and UDP-N-acetyl-alpha-D-glucosamine: step 1/6. In terms of biological role, involved in the biosynthesis of lipid A, a phosphorylated glycolipid that anchors the lipopolysaccharide to the outer membrane of the cell. The polypeptide is Acyl-[acyl-carrier-protein]--UDP-N-acetylglucosamine O-acyltransferase (Haemophilus influenzae (strain PittEE)).